The sequence spans 120 residues: Large ribosomal subunit protein bL17 (120 aa).

It belongs to the bacterial ribosomal protein bL17 family. As to quaternary structure, part of the 50S ribosomal subunit. Contacts protein L32.

The sequence is that of Large ribosomal subunit protein bL17 from Geobacillus thermodenitrificans (strain NG80-2).